Consider the following 863-residue polypeptide: Alanine--tRNA ligase (863 aa).

4 residues coordinate Zn(2+): His-552, His-556, Cys-654, and His-658.

This sequence belongs to the class-II aminoacyl-tRNA synthetase family. Zn(2+) serves as cofactor.

It localises to the cytoplasm. The enzyme catalyses tRNA(Ala) + L-alanine + ATP = L-alanyl-tRNA(Ala) + AMP + diphosphate. Its function is as follows. Catalyzes the attachment of alanine to tRNA(Ala) in a two-step reaction: alanine is first activated by ATP to form Ala-AMP and then transferred to the acceptor end of tRNA(Ala). Also edits incorrectly charged Ser-tRNA(Ala) and Gly-tRNA(Ala) via its editing domain. The chain is Alanine--tRNA ligase from Nitrosomonas europaea (strain ATCC 19718 / CIP 103999 / KCTC 2705 / NBRC 14298).